The following is a 748-amino-acid chain: MLLQFRAKTFFNNIAQDSLVTLITKRVGLGYRFLSSLCQPKNTALDSEGYKILFQTAAKSGSVVLGKLAHGHMIKSSLNPCLYLLNNLLNMYCKCRELGFARQLFDRMPERNIISFNSLISGYTQMGFYEQAMELFLEAREANLKLDKFTYAGALGFCGERCDLDLGELLHGLVVVNGLSQQVFLINVLIDMYSKCGKLDQAMSLFDRCDERDQVSWNSLISGYVRVGAAEEPLNLLAKMHRDGLNLTTYALGSVLKACCINLNEGFIEKGMAIHCYTAKLGMEFDIVVRTALLDMYAKNGSLKEAIKLFSLMPSKNVVTYNAMISGFLQMDEITDEASSEAFKLFMDMQRRGLEPSPSTFSVVLKACSAAKTLEYGRQIHALICKNNFQSDEFIGSALIELYALMGSTEDGMQCFASTSKQDIASWTSMIDCHVQNEQLESAFDLFRQLFSSHIRPEEYTVSLMMSACADFAALSSGEQIQGYAIKSGIDAFTSVKTSSISMYAKSGNMPLANQVFIEVQNPDVATYSAMISSLAQHGSANEALNIFESMKTHGIKPNQQAFLGVLIACCHGGLVTQGLKYFQCMKNDYRINPNEKHFTCLVDLLGRTGRLSDAENLILSSGFQDHPVTWRALLSSCRVYKDSVIGKRVAERLMELEPEASGSYVLLHNIYNDSGVNSSAEEVRELMRDRGVKKEPALSWIVIGNQTHSFAVADLSHPSSQMIYTMLETMDNVDFVDYTLVHFCSVT.

PPR repeat units lie at residues 46–80 (DSEGYKILFQTAAKSGSVVLGKLAHGHMIKSSLNP), 81–111 (CLYLLNNLLNMYCKCRELGFARQLFDRMPER), 112–146 (NIISFNSLISGYTQMGFYEQAMELFLEAREANLKL), 147–181 (DKFTYAGALGFCGERCDLDLGELLHGLVVVNGLSQ), 182–212 (QVFLINVLIDMYSKCGKLDQAMSLFDRCDER), 213–247 (DQVSWNSLISGYVRVGAAEEPLNLLAKMHRDGLNL), 248–285 (TTYALGSVLKACCINLNEGFIEKGMAIHCYTAKLGMEF), 286–316 (DIVVRTALLDMYAKNGSLKEAIKLFSLMPSK), 317–356 (NVVTYNAMISGFLQMDEITDEASSEAFKLFMDMQRRGLEP), 357–391 (SPSTFSVVLKACSAAKTLEYGRQIHALICKNNFQS), 392–422 (DEFIGSALIELYALMGSTEDGMQCFASTSKQ), 423–457 (DIASWTSMIDCHVQNEQLESAFDLFRQLFSSHIRP), 458–492 (EEYTVSLMMSACADFAALSSGEQIQGYAIKSGIDA), 493–523 (FTSVKTSSISMYAKSGNMPLANQVFIEVQNP), 524–558 (DVATYSAMISSLAQHGSANEALNIFESMKTHGIKP), 559–589 (NQQAFLGVLIACCHGGLVTQGLKYFQCMKND), and 595–629 (NEKHFTCLVDLLGRTGRLSDAENLILSSGFQDHPV). Residues 630–705 (TWRALLSSCR…EPALSWIVIG (76 aa)) form a type E motif region. The segment at 706 to 736 (NQTHSFAVADLSHPSSQMIYTMLETMDNVDF) is type E(+) motif.

The protein belongs to the PPR family. PCMP-E subfamily.

This Arabidopsis thaliana (Mouse-ear cress) protein is Pentatricopeptide repeat-containing protein At3g13880 (PCMP-E89).